We begin with the raw amino-acid sequence, 78 residues long: Acyl carrier protein (78 aa).

Residues 2–77 (SDTEERVKKI…DAVKFIDKAS (76 aa)) form the Carrier domain. Ser37 carries the O-(pantetheine 4'-phosphoryl)serine modification.

This sequence belongs to the acyl carrier protein (ACP) family. Post-translationally, 4'-phosphopantetheine is transferred from CoA to a specific serine of apo-ACP by AcpS. This modification is essential for activity because fatty acids are bound in thioester linkage to the sulfhydryl of the prosthetic group.

It is found in the cytoplasm. It participates in lipid metabolism; fatty acid biosynthesis. Carrier of the growing fatty acid chain in fatty acid biosynthesis. The polypeptide is Acyl carrier protein (Bartonella bacilliformis (strain ATCC 35685 / KC583 / Herrer 020/F12,63)).